Consider the following 938-residue polypeptide: MLPIKLLIFILGYLLSPTLQQYQQIPPRDYENKNYFLVELNTTNSQKPLIDFISHYRGHYNFEHQLSSLDNHYVFSIDKSHPHNSFLGNHNSNEYNLMKRQLGHEQDYDELISHVESIHLLPMKKLSKRIPVPIEMEDVVFDNRDDTGSDNHEATDEAHQKLIEIAKKLDIHDPEFTTQWHLINLKYPGHDVNVTGLWLENILGQGIVTALVDDGVDAESDDIKQNFNSEGSWDFNNKGKSPLPRLFDDYHGTRCAGEIAAVKNDVCGIGVAWKSQVSGIRILSGPITSSDEAEAMVYGLDTNDIYSCSWGPTDNGKVLSEPDVIVKKAMIKGIQEGRDKKGAIYVFASGNGGRFGDSCNFDGYTNSIYSITVGAIDYKGLHPQYSEACSAVMVVTYSSGSGEHIHTTDIKKKCSATHGGTSAAAPLASGIYSLILSANPNLTWRDVQYISVLSATPINEEDGNYQTTALNRKYSHKYGYGKTDAYKMVHFAKTWVNVKPQAWYYSDIIEVNQTITTTPEQKAPSKRDSPQKIIHSSVNVSEKDLKIMNVERVEHITVKVNIDSTYRGRVGMRIISPTGVISDLATFRVNDASTRGFQNWTFMSVAHWGETGIGEWKVEVFVDDSKGDQVEINFKDWQFRIFGESIDGDKAEVYDITKDYAAIRRELLEKEKQNSKSTTTTSSTTTATTTSGGEGDQKTTTSAENKESTTKVDNSASITTSQTASLTSSNEQHQPTESNSDSDSDTDDENKQEGEEDNDNDNDNGNKKANSDNTGFYLMSIAVVGFIAVLLVMKFHKTPGSGRRRRRRDGYEFDIIPGEDYSDSDDDEDDFDTRRADDDSFDLGHRNDQRVVSASQQQRQYDRQQDETRDRLFDDFNAESLPDYENDMFKIGDEEEEEEEGQQSAKAPSNSEGNSGTSTKKYKDNEADEDHKDVVGTQ.

Residues 1-20 (MLPIKLLIFILGYLLSPTLQ) form the signal peptide. N-linked (GlcNAc...) asparagine glycans are attached at residues Asn41 and Asn193. The region spanning 179–489 (QWHLINLKYP…YGKTDAYKMV (311 aa)) is the Peptidase S8 domain. Catalysis depends on charge relay system residues Asp213 and His251. 2 cysteine pairs are disulfide-bonded: Cys267–Cys414 and Cys359–Cys389. Ser422 (charge relay system) is an active-site residue. N-linked (GlcNAc...) asparagine glycans are attached at residues Asn441, Asn512, Asn539, and Asn599. In terms of domain architecture, P/Homo B spans 498 to 647 (VKPQAWYYSD…QFRIFGESID (150 aa)). The segment at 671–768 (EKQNSKSTTT…DNDNDNGNKK (98 aa)) is disordered. Residues 677-691 (STTTTSSTTTATTTS) are compositionally biased toward low complexity. A compositionally biased stretch (polar residues) spans 711-735 (KVDNSASITTSQTASLTSSNEQHQP). The span at 740–762 (SDSDSDTDDENKQEGEEDNDNDN) shows a compositional bias: acidic residues. A helical membrane pass occupies residues 775 to 795 (GFYLMSIAVVGFIAVLLVMKF). Topologically, residues 796–924 (HKTPGSGRRR…SGTSTKKYKD (129 aa)) are cytoplasmic. A compositionally biased stretch (basic residues) spans 798–808 (TPGSGRRRRRR). Residues 798–938 (TPGSGRRRRR…EDHKDVVGTQ (141 aa)) form a disordered region. Residues 820 to 831 (DYSDSDDDEDDF) show a composition bias toward acidic residues. A compositionally biased stretch (basic and acidic residues) spans 832 to 849 (DTRRADDDSFDLGHRNDQ). Over residues 850–859 (RVVSASQQQR) the composition is skewed to low complexity. Residues 860 to 874 (QYDRQQDETRDRLFD) are compositionally biased toward basic and acidic residues. Residues 902–919 (QQSAKAPSNSEGNSGTST) show a composition bias toward polar residues. Residues 921-938 (KYKDNEADEDHKDVVGTQ) are compositionally biased toward basic and acidic residues.

Belongs to the peptidase S8 family. Furin subfamily. The cofactor is Ca(2+). O-glycosylated.

The protein localises to the golgi apparatus. It localises to the trans-Golgi network membrane. It catalyses the reaction Cleavage of -Lys-Arg-|-Xaa- and -Arg-Arg-|-Xaa- bonds to process yeast alpha-factor pheromone and killer toxin precursors.. In Candida albicans (strain WO-1) (Yeast), this protein is Kexin (KEX2).